A 741-amino-acid polypeptide reads, in one-letter code: Probable basic-leucine zipper transcription factor I (741 aa).

The stretch at 77 to 117 forms a coiled coil; the sequence is QIIEQIQFLQQQQQQQHDQIQQQLHNFQQQYQQQYQQRQQQ. 4 stretches are compositionally biased toward low complexity: residues 153–164, 172–237, 277–290, and 381–390; these read QQPPQSLQQQQQ, PQQQ…QIQK, IQQQ…IQQK, and QQQQQQQQQQ. 3 disordered regions span residues 153–237, 277–305, and 349–390; these read QQPP…QIQK, IQQQ…SNSM, and KQKE…QQQQ. The 64-residue stretch at 429 to 492 folds into the bZIP domain; that stretch reads ESKKSIKRIN…HEGGTMAILK (64 aa). The interval 431 to 432 is basic motif; sequence KK. The interval 434 to 441 is leucine-zipper; sequence IKRINQNI.

It belongs to the bZIP family.

The protein resides in the nucleus. Its function is as follows. Probable transcriptional regulator. The sequence is that of Probable basic-leucine zipper transcription factor I (bzpI) from Dictyostelium discoideum (Social amoeba).